Here is a 485-residue protein sequence, read N- to C-terminus: Threonine synthase-like 2 (485 aa).

N6-(pyridoxal phosphate)lysine is present on lysine 113.

It belongs to the threonine synthase family. Pyridoxal 5'-phosphate is required as a cofactor.

Acts as a catabolic phospho-lyase on both gamma- and beta-phosphorylated substrates. Degrades O-phospho-threonine (PThr) to alpha-ketobutyrate, ammonia and phosphate. This chain is Threonine synthase-like 2 (Thnsl2), found in Rattus norvegicus (Rat).